The sequence spans 333 residues: MIDTTLPLTDIHRHLDGNIRPQTILELGRQYNISLPAHSLETLIPHVQVIANEPDLVSFLTKLDWGVKVLASLDACRRVAFENIEDAARHGLHYVELRFSPGYMAMAHQLPVAGVVEAVIDGVREGCRTFGVQAKLIGIMSRTFGEAACQQELEAFLAHRDQITALDLAGDELGFPGSLFLSHFNRARDAGWHITVHAGEAAGPESIWQAIRELGAERIGHGVKAIEDRALMDFLAEQQIGIESCLTSNIQTSTVAELAAHPLKTFLEHGIRASINTDDPGVQGVDIIHEYTVAAPAAGLSREQIRQAQINGLEMAFLSAEEKRALREKVAAK.

Positions 12 and 14 each coordinate Zn(2+). H14, D16, and G170 together coordinate substrate. H197 lines the Zn(2+) pocket. The active-site Proton donor is the E200. D278 serves as a coordination point for Zn(2+). D279 is a substrate binding site.

The protein belongs to the metallo-dependent hydrolases superfamily. Adenosine and AMP deaminases family. Adenosine deaminase subfamily. Requires Zn(2+) as cofactor.

The catalysed reaction is adenosine + H2O + H(+) = inosine + NH4(+). It catalyses the reaction 2'-deoxyadenosine + H2O + H(+) = 2'-deoxyinosine + NH4(+). Catalyzes the hydrolytic deamination of adenosine and 2-deoxyadenosine. The protein is Adenosine deaminase of Shigella dysenteriae serotype 1 (strain Sd197).